The primary structure comprises 299 residues: Putative S-adenosyl-L-methionine-dependent methyltransferase MAB_0027c (299 aa).

S-adenosyl-L-methionine is bound by residues Asp126 and 155-156 (DL).

The protein belongs to the UPF0677 family.

Its function is as follows. Exhibits S-adenosyl-L-methionine-dependent methyltransferase activity. The protein is Putative S-adenosyl-L-methionine-dependent methyltransferase MAB_0027c of Mycobacteroides abscessus (strain ATCC 19977 / DSM 44196 / CCUG 20993 / CIP 104536 / JCM 13569 / NCTC 13031 / TMC 1543 / L948) (Mycobacterium abscessus).